The sequence spans 202 residues: NADH-quinone oxidoreductase subunit C (202 aa).

It belongs to the complex I 30 kDa subunit family. In terms of assembly, NDH-1 is composed of 14 different subunits. Subunits NuoB, C, D, E, F, and G constitute the peripheral sector of the complex.

It localises to the cell inner membrane. The catalysed reaction is a quinone + NADH + 5 H(+)(in) = a quinol + NAD(+) + 4 H(+)(out). NDH-1 shuttles electrons from NADH, via FMN and iron-sulfur (Fe-S) centers, to quinones in the respiratory chain. The immediate electron acceptor for the enzyme in this species is believed to be ubiquinone. Couples the redox reaction to proton translocation (for every two electrons transferred, four hydrogen ions are translocated across the cytoplasmic membrane), and thus conserves the redox energy in a proton gradient. In Hyphomonas neptunium (strain ATCC 15444), this protein is NADH-quinone oxidoreductase subunit C.